Reading from the N-terminus, the 326-residue chain is Virulence-associated V antigen (326 aa).

Its subcellular location is the secreted. Possibly involved in calcium regulation of YOP expression, which includes the export process. This chain is Virulence-associated V antigen (lcrV), found in Yersinia pestis.